Here is a 360-residue protein sequence, read N- to C-terminus: UDP-N-acetylglucosamine--N-acetylmuramyl-(pentapeptide) pyrophosphoryl-undecaprenol N-acetylglucosamine transferase (360 aa).

UDP-N-acetyl-alpha-D-glucosamine is bound by residues 13–15 (TGG), Asn-125, Arg-164, Ser-191, and Gln-290.

This sequence belongs to the glycosyltransferase 28 family. MurG subfamily.

It localises to the cell inner membrane. The catalysed reaction is di-trans,octa-cis-undecaprenyl diphospho-N-acetyl-alpha-D-muramoyl-L-alanyl-D-glutamyl-meso-2,6-diaminopimeloyl-D-alanyl-D-alanine + UDP-N-acetyl-alpha-D-glucosamine = di-trans,octa-cis-undecaprenyl diphospho-[N-acetyl-alpha-D-glucosaminyl-(1-&gt;4)]-N-acetyl-alpha-D-muramoyl-L-alanyl-D-glutamyl-meso-2,6-diaminopimeloyl-D-alanyl-D-alanine + UDP + H(+). Its pathway is cell wall biogenesis; peptidoglycan biosynthesis. Its function is as follows. Cell wall formation. Catalyzes the transfer of a GlcNAc subunit on undecaprenyl-pyrophosphoryl-MurNAc-pentapeptide (lipid intermediate I) to form undecaprenyl-pyrophosphoryl-MurNAc-(pentapeptide)GlcNAc (lipid intermediate II). This chain is UDP-N-acetylglucosamine--N-acetylmuramyl-(pentapeptide) pyrophosphoryl-undecaprenol N-acetylglucosamine transferase, found in Hahella chejuensis (strain KCTC 2396).